A 109-amino-acid chain; its full sequence is uncharacterized protein (109 aa).

This is an uncharacterized protein from Mycoplasma genitalium (strain ATCC 33530 / DSM 19775 / NCTC 10195 / G37) (Mycoplasmoides genitalium).